The following is a 278-amino-acid chain: DegV domain-containing protein YejH (278 aa).

The region spanning 3 to 277 is the DegV domain; that stretch reads IKIVTDSSIT…PGAWAIMIDY (275 aa). Hexadecanoate-binding residues include Thr60 and Ser92.

Functionally, may bind long-chain fatty acids, such as palmitate, and may play a role in lipid transport or fatty acid metabolism. The sequence is that of DegV domain-containing protein YejH (yejH) from Lactococcus lactis subsp. lactis (strain IL1403) (Streptococcus lactis).